Here is a 288-residue protein sequence, read N- to C-terminus: GDSL esterase/lipase At3g43550 (288 aa).

Residues 1–19 (MKLQIIWLALVLIAVETYA) form the signal peptide. An N-linked (GlcNAc...) asparagine glycan is attached at asparagine 25. Residue serine 37 is the Nucleophile of the active site.

This sequence belongs to the 'GDSL' lipolytic enzyme family.

Its subcellular location is the secreted. The protein is GDSL esterase/lipase At3g43550 of Arabidopsis thaliana (Mouse-ear cress).